The chain runs to 394 residues: Chalcone synthase 8 (394 aa).

Residue Cys-165 is part of the active site.

Belongs to the thiolase-like superfamily. Chalcone/stilbene synthases family.

It catalyses the reaction (E)-4-coumaroyl-CoA + 3 malonyl-CoA + 3 H(+) = 2',4,4',6'-tetrahydroxychalcone + 3 CO2 + 4 CoA. It participates in secondary metabolite biosynthesis; flavonoid biosynthesis. Functionally, the primary product of this enzyme is 4,2',4',6'-tetrahydroxychalcone (also termed naringenin-chalcone or chalcone) which can under specific conditions spontaneously isomerize into naringenin. This is Chalcone synthase 8 (CHS8) from Bromheadia finlaysoniana (Orchid).